The chain runs to 547 residues: Chaperonin GroEL (547 aa).

ATP-binding positions include 30-33 (TLGP), Lys-51, 87-91 (DGTTT), Gly-415, 479-481 (NAA), and Asp-495.

This sequence belongs to the chaperonin (HSP60) family. In terms of assembly, forms a cylinder of 14 subunits composed of two heptameric rings stacked back-to-back. Interacts with the co-chaperonin GroES.

Its subcellular location is the cytoplasm. The catalysed reaction is ATP + H2O + a folded polypeptide = ADP + phosphate + an unfolded polypeptide.. Its function is as follows. Together with its co-chaperonin GroES, plays an essential role in assisting protein folding. The GroEL-GroES system forms a nano-cage that allows encapsulation of the non-native substrate proteins and provides a physical environment optimized to promote and accelerate protein folding. The protein is Chaperonin GroEL of Cupriavidus taiwanensis (strain DSM 17343 / BCRC 17206 / CCUG 44338 / CIP 107171 / LMG 19424 / R1) (Ralstonia taiwanensis (strain LMG 19424)).